The chain runs to 505 residues: MAMFYAHAFGGYDENLHAFPGISSTVANDVRKYSVVSVYNNKYDIVKDKYMWCYSYVNKRYIGALLPMFECNEYLQIGDPIHDLEGNQISIVTYRHKNYYALSGIGYESLDLCLEGVGIHHHTLEAGNAVYGKVQHDYSTIKEKAKEMNSLSPGPIIDYHVWIGDCVCQVTAVDVHGKEIMRMRFKKGAVLPIPNLVKVKLGEENDTVNLSTSISALLNSGGGTIEVTSKEERVDYVLMKRLESIRHLWSVVYDHFDVVNGKERCYVHMHSSNQSPMLSTVKTNLYMKTMGACLQMDYMEALEYLSELKESGGRSPRPELPEFEYPDGVEDAGSIERLAEEFFSRSELQADEPVNFCNSINVKHTSVSAKQLRTRIRQQLPSILSSFANTDGGYLFIGVDNNTHKVVGFTVGQDYLKLVESDIEKYIKRLRVVHFCEKKEDIKYACRFIKVYKPGEETTSTYVCAIKVERCCCAVFADWPESWYMDTSGSMKKYSPDEWVSHIKF.

Residues 1-238 are poxin-like; sequence MAMFYAHAFG…SKEERVDYVL (238 aa). Residue histidine 17 is the Proton donor of the active site. Tyrosine 138 (shared with catalytic histidine of dimeric partner) is an active-site residue. Lysine 142 acts as the Proton acceptor; shared with catalytic histidine of dimeric partner in catalysis. The interval 239-505 is schlafen-like; the sequence is MKRLESIRHL…PDEWVSHIKF (267 aa).

In the N-terminal section; belongs to the poxin family. The protein in the C-terminal section; belongs to the Schlafen protein family. Subgroup poxviridae B3 subfamily. As to quaternary structure, homodimer.

The enzyme catalyses 2',3'-cGAMP + H2O = Gp(2'-5')Ap(3') + H(+). Its function is as follows. Nuclease that is responsible for viral evasion of host cGAS-STING innate immunity. Cleaves 2',3'-cGAMP which is produced by host cGAS following recognition of cytosolic DNA and blocks the subsequent 2',3'-cGAMP-mediated activation of TMEM173/STING, which normally spreads to adjacent cells and activates the interferon and NF-kappa-B immune responses. The sequence is that of Poxin-Schlafen (OPG188) from Bos taurus (Bovine).